A 67-amino-acid chain; its full sequence is Penaeidin-4a (67 aa).

The N-terminal stretch at 1-19 (MRLVVCLVFLASFALVCQG) is a signal peptide. 3 disulfide bridges follow: cysteine 42–cysteine 56, cysteine 45–cysteine 63, and cysteine 57–cysteine 64. The residue at position 66 (arginine 66) is an Arginine amide.

The protein belongs to the penaeidin family.

It is found in the cytoplasmic granule. Functionally, antibacterial and antifungal activity. Presents chitin-binding activity. This Penaeus vannamei (Whiteleg shrimp) protein is Penaeidin-4a.